The primary structure comprises 317 residues: Ribosomal protein L11 methyltransferase (317 aa).

S-adenosyl-L-methionine is bound by residues T158, G179, D201, and N244.

The protein belongs to the methyltransferase superfamily. PrmA family.

Its subcellular location is the cytoplasm. It carries out the reaction L-lysyl-[protein] + 3 S-adenosyl-L-methionine = N(6),N(6),N(6)-trimethyl-L-lysyl-[protein] + 3 S-adenosyl-L-homocysteine + 3 H(+). Functionally, methylates ribosomal protein L11. This Streptococcus pyogenes serotype M12 (strain MGAS2096) protein is Ribosomal protein L11 methyltransferase.